The primary structure comprises 430 residues: Asparagine--tRNA ligase (430 aa).

Belongs to the class-II aminoacyl-tRNA synthetase family. In terms of assembly, homodimer.

It localises to the cytoplasm. It catalyses the reaction tRNA(Asn) + L-asparagine + ATP = L-asparaginyl-tRNA(Asn) + AMP + diphosphate + H(+). The polypeptide is Asparagine--tRNA ligase (Listeria monocytogenes serotype 4b (strain F2365)).